A 499-amino-acid polypeptide reads, in one-letter code: Lysine--tRNA ligase (499 aa).

2 residues coordinate Mg(2+): E408 and E415.

The protein belongs to the class-II aminoacyl-tRNA synthetase family. In terms of assembly, homodimer. Mg(2+) is required as a cofactor.

It is found in the cytoplasm. The catalysed reaction is tRNA(Lys) + L-lysine + ATP = L-lysyl-tRNA(Lys) + AMP + diphosphate. This is Lysine--tRNA ligase from Bacillus cereus (strain AH820).